The sequence spans 533 residues: Beta-xylosidase (533 aa).

Asp-14 (proton acceptor) is an active-site residue. Glu-186 (proton donor) is an active-site residue.

It belongs to the glycosyl hydrolase 43 family. As to quaternary structure, homodimer.

The protein localises to the cell membrane. It carries out the reaction Hydrolysis of (1-&gt;4)-beta-D-xylans, to remove successive D-xylose residues from the non-reducing termini.. The chain is Beta-xylosidase (xynB) from Bacillus subtilis (strain 168).